Reading from the N-terminus, the 240-residue chain is Uridylate kinase (240 aa).

13–16 (KASG) contributes to the ATP binding site. The tract at residues 21 to 26 (GSQGFG) is involved in allosteric activation by GTP. Residue glycine 55 coordinates UMP. The ATP site is built by glycine 56 and arginine 60. UMP contacts are provided by residues aspartate 75 and 136–143 (TGNPFFTT). ATP is bound by residues threonine 163, glutamine 164, tyrosine 169, and aspartate 172.

It belongs to the UMP kinase family. Homohexamer.

Its subcellular location is the cytoplasm. It carries out the reaction UMP + ATP = UDP + ADP. It functions in the pathway pyrimidine metabolism; CTP biosynthesis via de novo pathway; UDP from UMP (UMPK route): step 1/1. With respect to regulation, allosterically activated by GTP. Inhibited by UTP. Functionally, catalyzes the reversible phosphorylation of UMP to UDP. The polypeptide is Uridylate kinase (Brucella anthropi (strain ATCC 49188 / DSM 6882 / CCUG 24695 / JCM 21032 / LMG 3331 / NBRC 15819 / NCTC 12168 / Alc 37) (Ochrobactrum anthropi)).